The primary structure comprises 342 residues: Phomopsin biosynthesis cluster protein B' (342 aa).

Residues 1–22 (MESIAKAKSLPNKGRTYDSQRP) are disordered. Residues 87–107 (VLIIGCAVISLFAIIGALGFA) traverse the membrane as a helical segment. Residues 118-186 (CASPAHQNPH…QCGESPDEAQ (69 aa)) are disordered. Positions 144-155 (HSGSHSSSSSTN) are enriched in low complexity. N-linked (GlcNAc...) asparagine glycosylation is present at N248.

The protein localises to the membrane. Its function is as follows. Part of the gene cluster that mediates the biosynthesis of the phomopsins, a group of hexapeptide mycotoxins which infects lupins and causes lupinosis disease in livestock. The role of phomB' within the phomopsins biosynthesis pathway has still to be determined. The pathway starts with the processing of the precursor phomA by several endopeptidases including kexin proteases as well as the cluster-specific S41 family peptidase phomP1 and the oligopeptidase phomG to produce 10 identical copies of the hexapeptide Tyr-Val-Ile-Pro-Ile-Asp. After being excised from the precursor peptide, the core peptides are cyclized and modified post-translationally by enzymes encoded within the gene cluster. The timing and order of proteolysis of the phomA precursor and PTMs are still unknown. Two tyrosinase-like enzymes, phomQ1 and phomQ2, catalyze the chlorination and hydroxylation of Tyr, respectively. PhomYb, is proposed to be involved in the construction of the macrocyclic structure. The other 4 ustYa family proteins may be involved in PTMs that generate the unique structure of phomopsin A. PhomYa is required for the hydroxylation of C-beta of Tyr. PhomYc, phomYd, and phomYe are responsible for the biosynthesis of 2,3-dehydroisoleucine (dIle), 2,3-dehydroaspartic acid (dAsp), and 3,4-dehydroproline (dPro), respectively. While dIle formation by phomYc is indispensable for the installation of dAsp by phomYd, the order of the other PTMs have not been elucidated yet. Most of the biosynthetic enzymes likely have broad substrate specificity, and thus, there might be a metabolic grid from a precursor to phomopsin A. The enzyme(s) responsible for the biosynthesis of 3,4-dehydrovaline (dVal) have also not been identified yet. Finally, phomM acts as an S-adenosylmethionine-dependent alpha-N-methyltransferase that catalyzes two successive N-methylation reactions, converting N-desmethyl-phomopsin A to phomopsin A and phomopsin A further to an N,N-dimethylated congener called phomopsin E. The chain is Phomopsin biosynthesis cluster protein B' from Diaporthe leptostromiformis (Lupinosis disease fungus).